A 313-amino-acid polypeptide reads, in one-letter code: Probable GTP 3',8-cyclase (313 aa).

A Radical SAM core domain is found at 4-224 (RFGRSIEDLR…EIRSKHYRPR (221 aa)). R13 contributes to the GTP binding site. C20, C24, and C27 together coordinate [4Fe-4S] cluster. K60 serves as a coordination point for GTP. G64 contributes to the S-adenosyl-L-methionine binding site. T90 serves as a coordination point for GTP. S114 provides a ligand contact to S-adenosyl-L-methionine. Residue K151 coordinates GTP. C244 and C247 together coordinate [4Fe-4S] cluster. 249–251 (RIR) provides a ligand contact to GTP. A [4Fe-4S] cluster-binding site is contributed by C261.

The protein belongs to the radical SAM superfamily. MoaA family. [4Fe-4S] cluster serves as cofactor.

The catalysed reaction is GTP + AH2 + S-adenosyl-L-methionine = (8S)-3',8-cyclo-7,8-dihydroguanosine 5'-triphosphate + 5'-deoxyadenosine + L-methionine + A + H(+). The protein operates within cofactor biosynthesis; molybdopterin biosynthesis. Functionally, catalyzes the cyclization of GTP to (8S)-3',8-cyclo-7,8-dihydroguanosine 5'-triphosphate. The chain is Probable GTP 3',8-cyclase from Sulfurisphaera tokodaii (strain DSM 16993 / JCM 10545 / NBRC 100140 / 7) (Sulfolobus tokodaii).